A 291-amino-acid polypeptide reads, in one-letter code: Putative transport permease ycf38 (291 aa).

6 helical membrane-spanning segments follow: residues 47 to 67, 87 to 107, 135 to 155, 165 to 185, 195 to 215, and 262 to 282; these read ATLM…GGLF, SGII…PLMF, FMTC…LFMG, MIFG…SLAL, LLAF…ALAP, and ICLG…AYLV. Residues 47-289 form the ABC transmembrane type-2 domain; the sequence is ATLMAGIIQP…YLVSNILKAK (243 aa).

This sequence belongs to the ABC-2 integral membrane protein family.

The protein resides in the plastid. It localises to the chloroplast membrane. This Pyropia yezoensis (Susabi-nori) protein is Putative transport permease ycf38 (ycf38).